The chain runs to 477 residues: Glutamate--tRNA ligase 1 (477 aa).

Residues 12 to 22 (PSPTGALHLGN) carry the 'HIGH' region motif. The short motif at 253–257 (PLSKR) is the 'KMSKS' region element. Lys256 provides a ligand contact to ATP.

The protein belongs to the class-I aminoacyl-tRNA synthetase family. Glutamate--tRNA ligase type 1 subfamily. As to quaternary structure, monomer.

It localises to the cytoplasm. It catalyses the reaction tRNA(Glu) + L-glutamate + ATP = L-glutamyl-tRNA(Glu) + AMP + diphosphate. Its function is as follows. Catalyzes the attachment of glutamate to tRNA(Glu) in a two-step reaction: glutamate is first activated by ATP to form Glu-AMP and then transferred to the acceptor end of tRNA(Glu). This chain is Glutamate--tRNA ligase 1, found in Halorhodospira halophila (strain DSM 244 / SL1) (Ectothiorhodospira halophila (strain DSM 244 / SL1)).